The sequence spans 1155 residues: Cilia- and flagella-associated protein 251 (1155 aa).

Composition is skewed to basic and acidic residues over residues 1–19 (MSDAEEAPREATRENGETE) and 31–59 (KEVEDPQQESKDDTLAWRESQEEERKTGE). Disordered stretches follow at residues 1 to 144 (MSDA…KLSL) and 167 to 225 (LDQI…DIQS). The span at 60 to 69 (EEGEEEEEKE) shows a compositional bias: acidic residues. Residues 70–95 (EEGKKDKKIVMEETEEKAGESQEKEA) show a composition bias toward basic and acidic residues. Low complexity predominate over residues 99–111 (QEETTVEPQEVTE). 2 stretches are compositionally biased toward polar residues: residues 118-128 (TQITDSQSVTS) and 172-182 (PEEQQISSPER). Residues 201-220 (GQERRDLEPENREEGQERTV) are compositionally biased toward basic and acidic residues. WD repeat units lie at residues 341–383 (PVHT…IWKW), 391–431 (ACTL…AWYE), 442–481 (LLTEKTFNKLVGKFSQSVFHLNLTQILSATMEGKLVVWDI), 499–534 (PCKLVHLQKEGITVLTTTDSYIVTGDIKGNIKFYDH), 537–597 (SIVN…VYHL), 601–641 (GTKL…VWNY), 647–684 (LFSRVFEKGLGVQSLTYNPEGALLGAGFTEGTVYILDA), 694–730 (PFKYSRTSVTHISFSHDSQYMATADRSFTVAVYMLVV), 737–780 (WEYL…GYDL), 791–831 (LDIH…LFNA), 837–883 (RKTL…ILPV), 889–927 (KTSAIVCHPNGVAGMAVSYDGHYAFTAGGHDRSVVQWKI), 965–1005 (YFYY…FYPS), and 1025–1065 (GKLI…GYTN).

It localises to the cytoplasm. The protein localises to the cytoskeleton. The protein resides in the cilium axoneme. It is found in the cell projection. Its subcellular location is the cilium. It localises to the flagellum. Functionally, involved in spermatozoa motility. May also regulate cilium motility through its role in the assembly of the axonemal radial spokes. The sequence is that of Cilia- and flagella-associated protein 251 from Pongo abelii (Sumatran orangutan).